The following is a 251-amino-acid chain: 5'-nucleotidase SurE (251 aa).

A divalent metal cation-binding residues include aspartate 8, aspartate 9, serine 40, and asparagine 95.

The protein belongs to the SurE nucleotidase family. Requires a divalent metal cation as cofactor.

The protein resides in the cytoplasm. The enzyme catalyses a ribonucleoside 5'-phosphate + H2O = a ribonucleoside + phosphate. Functionally, nucleotidase that shows phosphatase activity on nucleoside 5'-monophosphates. The chain is 5'-nucleotidase SurE from Maridesulfovibrio salexigens (strain ATCC 14822 / DSM 2638 / NCIMB 8403 / VKM B-1763) (Desulfovibrio salexigens).